Reading from the N-terminus, the 374-residue chain is N-acetyldiaminopimelate deacetylase (374 aa).

The active site involves Asp-68. Residue Glu-127 is the Proton acceptor of the active site.

Belongs to the peptidase M20A family. N-acetyldiaminopimelate deacetylase subfamily.

It carries out the reaction N-acetyl-(2S,6S)-2,6-diaminopimelate + H2O = (2S,6S)-2,6-diaminopimelate + acetate. It participates in amino-acid biosynthesis; L-lysine biosynthesis via DAP pathway; LL-2,6-diaminopimelate from (S)-tetrahydrodipicolinate (acetylase route): step 3/3. Its function is as follows. Catalyzes the conversion of N-acetyl-diaminopimelate to diaminopimelate and acetate. This is N-acetyldiaminopimelate deacetylase from Shouchella clausii (strain KSM-K16) (Alkalihalobacillus clausii).